Here is a 216-residue protein sequence, read N- to C-terminus: tRNA (guanine-N(7)-)-methyltransferase (216 aa).

Residues glutamate 44, glutamate 69, asparagine 96, and aspartate 118 each coordinate S-adenosyl-L-methionine. Aspartate 118 is an active-site residue. Lysine 122 is a substrate binding site. Residues 124-129 (RHEKRR) form an interaction with RNA region. Substrate contacts are provided by residues aspartate 154 and 191–194 (TEYE).

The protein belongs to the class I-like SAM-binding methyltransferase superfamily. TrmB family.

It catalyses the reaction guanosine(46) in tRNA + S-adenosyl-L-methionine = N(7)-methylguanosine(46) in tRNA + S-adenosyl-L-homocysteine. The protein operates within tRNA modification; N(7)-methylguanine-tRNA biosynthesis. Catalyzes the formation of N(7)-methylguanine at position 46 (m7G46) in tRNA. The sequence is that of tRNA (guanine-N(7)-)-methyltransferase from Geobacillus thermodenitrificans (strain NG80-2).